A 99-amino-acid chain; its full sequence is Acylphosphatase-2 (99 aa).

Position 2 is an N-acetylserine (Ser-2). The region spanning 9–99 (SVDYEVFGRV…LEYSSFNIRY (91 aa)) is the Acylphosphatase-like domain. Residues Arg-24 and Asn-42 contribute to the active site. Phosphoserine is present on Ser-93.

Belongs to the acylphosphatase family.

The enzyme catalyses an acyl phosphate + H2O = a carboxylate + phosphate + H(+). Functionally, its physiological role is not yet clear. This Bos taurus (Bovine) protein is Acylphosphatase-2 (ACYP2).